The primary structure comprises 238 residues: uncharacterized protein (238 aa).

The interval 1-20 (MPNLHSLPLGTRPENAIRNN) is disordered.

It belongs to the PEP2 family.

This is an uncharacterized protein from Emericella nidulans (strain FGSC A4 / ATCC 38163 / CBS 112.46 / NRRL 194 / M139) (Aspergillus nidulans).